Here is a 105-residue protein sequence, read N- to C-terminus: Imizoquin biosynthesis cluster protein I (105 aa).

Positions 1–15 (MSSGEPTTMTPSPSE) are enriched in polar residues. Positions 1–43 (MSSGEPTTMTPSPSERTPLLSNGSGGAADDGGTTVTISKPNDG) are disordered.

It participates in secondary metabolite biosynthesis. In terms of biological role, part of the gene cluster that mediates the biosynthesis of imizoquins A to D, tripeptide-derived alkaloids that serve a protective role against oxidative stress that are essential for normal germination. ImqB is a canonical three-module NRPS that assembles the tripeptide backbone of the imizoquins via condensation of Trp, Tyr, and Leu-derived precursors. N-methylation by imqF and phenol oxidation by imqC, followed by cyclization via the FAD-dependent oxidase imqH carry out the three-step transformation of L-tyrosine into tetrahydroisoquinoline. Importantly, this sequence requires the presence of a free amine in the tyrosine moiety, indicating that isoquinoline formation occurs prior to peptide bond formation. The imidazolidin-4-one ring of imizoquins could form following additional oxidation of the methyl-derived bridgehead carbon by imqH. Lastly, O-methylation by imqG and leucine hydroxylation by imqE complete biosynthesis of the imizoquins. This Aspergillus flavus (strain ATCC 200026 / FGSC A1120 / IAM 13836 / NRRL 3357 / JCM 12722 / SRRC 167) protein is Imizoquin biosynthesis cluster protein I.